The primary structure comprises 539 residues: Hydroxylamine reductase (539 aa).

[4Fe-4S] cluster contacts are provided by C3, C6, C15, and C21. Residues H235, E259, C303, C394, C422, C447, E482, and K484 each contribute to the hybrid [4Fe-2O-2S] cluster site. C394 carries the cysteine persulfide modification.

It belongs to the HCP family. Requires [4Fe-4S] cluster as cofactor. The cofactor is hybrid [4Fe-2O-2S] cluster.

The protein localises to the cytoplasm. The catalysed reaction is A + NH4(+) + H2O = hydroxylamine + AH2 + H(+). Catalyzes the reduction of hydroxylamine to form NH(3) and H(2)O. The polypeptide is Hydroxylamine reductase (Methanocaldococcus jannaschii (strain ATCC 43067 / DSM 2661 / JAL-1 / JCM 10045 / NBRC 100440) (Methanococcus jannaschii)).